The chain runs to 265 residues: Leucyl/phenylalanyl-tRNA--protein transferase (265 aa).

The tract at residues 244–265 (LDTGPDPASSSVTEISLRPAAP) is disordered.

The protein belongs to the L/F-transferase family.

It localises to the cytoplasm. It carries out the reaction N-terminal L-lysyl-[protein] + L-leucyl-tRNA(Leu) = N-terminal L-leucyl-L-lysyl-[protein] + tRNA(Leu) + H(+). It catalyses the reaction N-terminal L-arginyl-[protein] + L-leucyl-tRNA(Leu) = N-terminal L-leucyl-L-arginyl-[protein] + tRNA(Leu) + H(+). The catalysed reaction is L-phenylalanyl-tRNA(Phe) + an N-terminal L-alpha-aminoacyl-[protein] = an N-terminal L-phenylalanyl-L-alpha-aminoacyl-[protein] + tRNA(Phe). Functionally, functions in the N-end rule pathway of protein degradation where it conjugates Leu, Phe and, less efficiently, Met from aminoacyl-tRNAs to the N-termini of proteins containing an N-terminal arginine or lysine. The protein is Leucyl/phenylalanyl-tRNA--protein transferase of Methylibium petroleiphilum (strain ATCC BAA-1232 / LMG 22953 / PM1).